Consider the following 252-residue polypeptide: MLAKRIIPCLDVDNGRVVKGVQFLDIRDAGDPVEVARRYNEQGADEITFLDITATHHGRDTTYRTVERMAESVFVPLTVGGGVRKVEDIRLLLNAGADKVSINSAAVFNPEFVQEASQRFGAQCIVVAIDAKKTGDNTWEIFTHGGRKPTGIDALEWSVKMAEYGAGELLVTSMDADGTKAGYDIALMREINNRVSIPTIASGGVGNLQHMADGILKGGADAVLAASIFHFGQHTIPEAKQFLAAQGIEMRL.

Residues D11 and D130 contribute to the active site.

The protein belongs to the HisA/HisF family. Heterodimer of HisH and HisF.

The protein localises to the cytoplasm. The catalysed reaction is 5-[(5-phospho-1-deoxy-D-ribulos-1-ylimino)methylamino]-1-(5-phospho-beta-D-ribosyl)imidazole-4-carboxamide + L-glutamine = D-erythro-1-(imidazol-4-yl)glycerol 3-phosphate + 5-amino-1-(5-phospho-beta-D-ribosyl)imidazole-4-carboxamide + L-glutamate + H(+). The protein operates within amino-acid biosynthesis; L-histidine biosynthesis; L-histidine from 5-phospho-alpha-D-ribose 1-diphosphate: step 5/9. Functionally, IGPS catalyzes the conversion of PRFAR and glutamine to IGP, AICAR and glutamate. The HisF subunit catalyzes the cyclization activity that produces IGP and AICAR from PRFAR using the ammonia provided by the HisH subunit. The sequence is that of Imidazole glycerol phosphate synthase subunit HisF from Acinetobacter baylyi (strain ATCC 33305 / BD413 / ADP1).